A 348-amino-acid polypeptide reads, in one-letter code: D-alanine--D-alanine ligase (348 aa).

The ATP-grasp domain occupies 132 to 334; that stretch reads KRVLESIGIP…YPDLIEELVT (203 aa). 162-217 contributes to the ATP binding site; it reads LARLTFPIFVKPANMGSSVGISKAQTKVELRKAIQLALTYDSRVLIEQGVIAREIE. 3 residues coordinate Mg(2+): D288, E301, and N303.

Belongs to the D-alanine--D-alanine ligase family. It depends on Mg(2+) as a cofactor. The cofactor is Mn(2+).

It localises to the cytoplasm. It catalyses the reaction 2 D-alanine + ATP = D-alanyl-D-alanine + ADP + phosphate + H(+). The protein operates within cell wall biogenesis; peptidoglycan biosynthesis. Functionally, cell wall formation. In Streptococcus pyogenes serotype M4 (strain MGAS10750), this protein is D-alanine--D-alanine ligase.